Consider the following 638-residue polypeptide: Chaperone protein HtpG (638 aa).

The a; substrate-binding stretch occupies residues 1–343; it reads MTSTIDSDGA…SADLPLNISR (343 aa). The interval 344–557 is b; that stretch reads EMIQESPILA…ESGPDRQLEK (214 aa). Residues 558–638 form a c region; the sequence is ILVGVGQLTG…VERGLRGSTA (81 aa).

This sequence belongs to the heat shock protein 90 family. In terms of assembly, homodimer.

It is found in the cytoplasm. Its function is as follows. Molecular chaperone. Has ATPase activity. The chain is Chaperone protein HtpG from Nitrobacter hamburgensis (strain DSM 10229 / NCIMB 13809 / X14).